The following is a 360-amino-acid chain: Heme A synthase (360 aa).

9 consecutive transmembrane segments (helical) span residues 29–49 (WLFA…ATRL), 111–131 (FLGR…WWTG), 139–159 (LGLL…WIMV), 175–195 (LAAH…LAAG), 210–230 (LTAL…GLVA), 242–262 (PLMD…TPWI), 269–289 (VALV…VAAL), 309–329 (AILG…LLAV), and 330–350 (PLWA…MAAV). H276 lines the heme pocket. H337 lines the heme pocket.

It belongs to the COX15/CtaA family. Type 2 subfamily. As to quaternary structure, interacts with CtaB. It depends on heme b as a cofactor.

Its subcellular location is the cell membrane. It catalyses the reaction Fe(II)-heme o + 2 A + H2O = Fe(II)-heme a + 2 AH2. It participates in porphyrin-containing compound metabolism; heme A biosynthesis; heme A from heme O: step 1/1. In terms of biological role, catalyzes the conversion of heme O to heme A by two successive hydroxylations of the methyl group at C8. The first hydroxylation forms heme I, the second hydroxylation results in an unstable dihydroxymethyl group, which spontaneously dehydrates, resulting in the formyl group of heme A. The polypeptide is Heme A synthase (Methylobacterium nodulans (strain LMG 21967 / CNCM I-2342 / ORS 2060)).